The chain runs to 430 residues: Glutamate-1-semialdehyde 2,1-aminomutase 2 (430 aa).

Lys-268 is modified (N6-(pyridoxal phosphate)lysine).

Belongs to the class-III pyridoxal-phosphate-dependent aminotransferase family. HemL subfamily. In terms of assembly, homodimer. Pyridoxal 5'-phosphate serves as cofactor.

It is found in the cytoplasm. The catalysed reaction is (S)-4-amino-5-oxopentanoate = 5-aminolevulinate. It participates in porphyrin-containing compound metabolism; protoporphyrin-IX biosynthesis; 5-aminolevulinate from L-glutamyl-tRNA(Glu): step 2/2. This Shouchella clausii (strain KSM-K16) (Alkalihalobacillus clausii) protein is Glutamate-1-semialdehyde 2,1-aminomutase 2.